The chain runs to 393 residues: Flavohemoprotein (393 aa).

A Globin domain is found at 1 to 139 (MLSNAQRALI…LADLLIEAEE (139 aa)). His-85 provides a ligand contact to heme b. Residues Tyr-95 and Glu-138 each act as charge relay system in the active site. The tract at residues 150–393 (GGWRGVRRFR…FFGPAAALDA (244 aa)) is reductase. The 104-residue stretch at 153-256 (RGVRRFRVAR…FPPAGDFVLR (104 aa)) folds into the FAD-binding FR-type domain. FAD contacts are provided by residues Tyr-191 and 205 to 208 (RNYS). 268–273 (GVGITP) contacts NADP(+). FAD is bound at residue 384-387 (FFGP).

The protein belongs to the globin family. Two-domain flavohemoproteins subfamily. In the C-terminal section; belongs to the flavoprotein pyridine nucleotide cytochrome reductase family. Heme b is required as a cofactor. FAD serves as cofactor.

It carries out the reaction 2 nitric oxide + NADPH + 2 O2 = 2 nitrate + NADP(+) + H(+). The enzyme catalyses 2 nitric oxide + NADH + 2 O2 = 2 nitrate + NAD(+) + H(+). In terms of biological role, is involved in NO detoxification in an aerobic process, termed nitric oxide dioxygenase (NOD) reaction that utilizes O(2) and NAD(P)H to convert NO to nitrate, which protects the bacterium from various noxious nitrogen compounds. Therefore, plays a central role in the inducible response to nitrosative stress. The polypeptide is Flavohemoprotein (Pseudomonas aeruginosa (strain ATCC 15692 / DSM 22644 / CIP 104116 / JCM 14847 / LMG 12228 / 1C / PRS 101 / PAO1)).